Consider the following 153-residue polypeptide: MAATPAAIEVSLTIVFVLFFSADVSLTRNSEMKAHTSKMDSYSSSIYMNVLPTSLAQTSYHLAPISHLKCLSVQCSSHIHYSYYYGASVLERCVFHRSRIRGARFIVPIPFYCISKAQECFLTVYILPKNPFRVPSEMQLQLLAKKKLKPNLL.

2 consecutive transmembrane segments (helical) span residues 1–21 (MAAT…LFFS) and 106–126 (IVPI…TVYI).

The protein localises to the membrane. This is an uncharacterized protein from Saccharomyces cerevisiae (strain ATCC 204508 / S288c) (Baker's yeast).